We begin with the raw amino-acid sequence, 141 residues long: Large ribosomal subunit protein uL11 (141 aa).

Belongs to the universal ribosomal protein uL11 family. As to quaternary structure, part of the ribosomal stalk of the 50S ribosomal subunit. Interacts with L10 and the large rRNA to form the base of the stalk. L10 forms an elongated spine to which L12 dimers bind in a sequential fashion forming a multimeric L10(L12)X complex. In terms of processing, one or more lysine residues are methylated.

Its function is as follows. Forms part of the ribosomal stalk which helps the ribosome interact with GTP-bound translation factors. This is Large ribosomal subunit protein uL11 from Chlamydia abortus (strain DSM 27085 / S26/3) (Chlamydophila abortus).